Consider the following 792-residue polypeptide: Phenylalanine--tRNA ligase beta subunit (792 aa).

A tRNA-binding domain is found at 39–147; it reads GEALDLIVVA…DDAPIGTPLA (109 aa). The 76-residue stretch at 400–475 folds into the B5 domain; it reads PAPASILLRR…RIRGYEHLPT (76 aa). 4 residues coordinate Mg(2+): Asp-453, Asp-459, Glu-462, and Glu-463. In terms of domain architecture, FDX-ACB spans 698-791; the sequence is SRFPFVRRDL…IQQRHDVRIR (94 aa).

Belongs to the phenylalanyl-tRNA synthetase beta subunit family. Type 1 subfamily. As to quaternary structure, tetramer of two alpha and two beta subunits. The cofactor is Mg(2+).

It is found in the cytoplasm. The catalysed reaction is tRNA(Phe) + L-phenylalanine + ATP = L-phenylalanyl-tRNA(Phe) + AMP + diphosphate + H(+). This chain is Phenylalanine--tRNA ligase beta subunit (pheT), found in Xylella fastidiosa (strain 9a5c).